We begin with the raw amino-acid sequence, 75 residues long: Small ribosomal subunit protein bS18 (75 aa).

This sequence belongs to the bacterial ribosomal protein bS18 family. Part of the 30S ribosomal subunit. Forms a tight heterodimer with protein bS6.

Binds as a heterodimer with protein bS6 to the central domain of the 16S rRNA, where it helps stabilize the platform of the 30S subunit. This is Small ribosomal subunit protein bS18 from Dinoroseobacter shibae (strain DSM 16493 / NCIMB 14021 / DFL 12).